A 129-amino-acid polypeptide reads, in one-letter code: Small ribosomal subunit protein uS11 (129 aa).

Residues 108 to 129 (EDVTPIPHDGTKPKGGKRGRRV) are disordered.

This sequence belongs to the universal ribosomal protein uS11 family. As to quaternary structure, part of the 30S ribosomal subunit.

Located on the platform of the 30S subunit. This is Small ribosomal subunit protein uS11 from Methanothrix thermoacetophila (strain DSM 6194 / JCM 14653 / NBRC 101360 / PT) (Methanosaeta thermophila).